A 363-amino-acid polypeptide reads, in one-letter code: tRNA dimethylallyltransferase (363 aa).

An ATP-binding site is contributed by 65 to 72 (GPTASGKS). 67–72 (TASGKS) contributes to the substrate binding site. 2 interaction with substrate tRNA regions span residues 90–93 (DSMQ) and 214–218 (QRLIR).

It belongs to the IPP transferase family. Monomer. The cofactor is Mg(2+).

The catalysed reaction is adenosine(37) in tRNA + dimethylallyl diphosphate = N(6)-dimethylallyladenosine(37) in tRNA + diphosphate. Functionally, catalyzes the transfer of a dimethylallyl group onto the adenine at position 37 in tRNAs that read codons beginning with uridine, leading to the formation of N6-(dimethylallyl)adenosine (i(6)A). The protein is tRNA dimethylallyltransferase of Rickettsia massiliae (strain Mtu5).